The following is a 122-amino-acid chain: Small ribosomal subunit protein uS13 (122 aa).

The disordered stretch occupies residues 97–122 (PVRGQRTRTNARTRKGPRKTVAKKKK). Residues 101 to 122 (QRTRTNARTRKGPRKTVAKKKK) are compositionally biased toward basic residues.

Belongs to the universal ribosomal protein uS13 family. Part of the 30S ribosomal subunit. Forms a loose heterodimer with protein S19. Forms two bridges to the 50S subunit in the 70S ribosome.

Functionally, located at the top of the head of the 30S subunit, it contacts several helices of the 16S rRNA. In the 70S ribosome it contacts the 23S rRNA (bridge B1a) and protein L5 of the 50S subunit (bridge B1b), connecting the 2 subunits; these bridges are implicated in subunit movement. Contacts the tRNAs in the A and P-sites. This Caldanaerobacter subterraneus subsp. tengcongensis (strain DSM 15242 / JCM 11007 / NBRC 100824 / MB4) (Thermoanaerobacter tengcongensis) protein is Small ribosomal subunit protein uS13.